The primary structure comprises 607 residues: Acyl-coenzyme A thioesterase 11 (607 aa).

The transit peptide at 1–13 (MIQNVGNHLRRGL) directs the protein to the mitochondrion. Phosphoserine occurs at positions 15 and 25. The HotDog ACOT-type 1 domain occupies 43–155 (NPTEVQMSQL…LATFVARREI (113 aa)). Residues 91–93 (TAS), 120–122 (NSS), R181, and 271–273 (HFR) each bind CoA. The region spanning 216–329 (EKTRVESVEL…FMTFVVLDAD (114 aa)) is the HotDog ACOT-type 2 domain. An START domain is found at 375–585 (LSVPWDPSNQ…GWNGKLAGGH (211 aa)).

In terms of tissue distribution, isoform 1 is predominantly expressed in skeletal muscle, liver, testis, stomach, spleen, lung and brain. Isoform 2 is predominantly expressed in kidney, uterus, hibernoma and white adipose tissue.

The protein localises to the mitochondrion matrix. The protein resides in the cytoplasm. It catalyses the reaction hexadecanoyl-CoA + H2O = hexadecanoate + CoA + H(+). It carries out the reaction tetradecanoyl-CoA + H2O = tetradecanoate + CoA + H(+). The catalysed reaction is dodecanoyl-CoA + H2O = dodecanoate + CoA + H(+). The enzyme catalyses butanoyl-CoA + H2O = butanoate + CoA + H(+). Its pathway is lipid metabolism; fatty acid metabolism. In terms of biological role, has an acyl-CoA thioesterase activity with a preference for the long chain fatty acyl-CoA thioesters hexadecanoyl-CoA/palmitoyl-CoA and tetradecanoyl-CoA/myristoyl-CoA which are the main substrates in the mitochondrial beta-oxidation pathway. This Homo sapiens (Human) protein is Acyl-coenzyme A thioesterase 11 (ACOT11).